We begin with the raw amino-acid sequence, 161 residues long: Phosphopantetheine adenylyltransferase (161 aa).

S10 contacts substrate. Residues 10–11 (SF) and H18 each bind ATP. Substrate contacts are provided by K42, L74, and R88. ATP-binding positions include 88-89 (RG), E99, and 124-130 (YSFLSSS).

It belongs to the bacterial CoaD family. In terms of assembly, homohexamer. The cofactor is Mg(2+).

The protein resides in the cytoplasm. The catalysed reaction is (R)-4'-phosphopantetheine + ATP + H(+) = 3'-dephospho-CoA + diphosphate. It functions in the pathway cofactor biosynthesis; coenzyme A biosynthesis; CoA from (R)-pantothenate: step 4/5. In terms of biological role, reversibly transfers an adenylyl group from ATP to 4'-phosphopantetheine, yielding dephospho-CoA (dPCoA) and pyrophosphate. The chain is Phosphopantetheine adenylyltransferase from Bacillus subtilis (strain 168).